A 174-amino-acid chain; its full sequence is RxLR effector protein 207 (174 aa).

Residues 1–20 form the signal peptide; it reads MSKVFLLLVLSVFALVSCDA. A RxLR-dEER motif is present at residues 46–62; sequence RMLRAQEEPTNAADEER. The tract at residues 82 to 99 is disordered; it reads VTNSKLVQSMNNKLASLT.

This sequence belongs to the RxLR effector family. In terms of assembly, interacts with Nicotiana benthamiana ACD11, BPA1 (binding partner of ACD11), as well as BPA-like proteins BPL1, BPL2, BPL3 and BPL4.

It is found in the secreted. The protein resides in the host cell membrane. Secreted effector that activates ROS-mediated cell death in plant host and is essential for virulence. Plays a role in the transition from the biotrophic to necrotrophic stage. Associates with and promotes the degradation of Nicotiana benthamiana BPA1, BPL1, BPL2, and BPL4 to disrupt ACD11 stabilization in a 26S proteasome-dependent manner. This is RxLR effector protein 207 from Phytophthora capsici.